Here is a 320-residue protein sequence, read N- to C-terminus: MKDTFQRSINYMRISITDLCNLRCQYCMPEKGIYKKTHQDILTLEEIEQIVRIGAENGINKVRITGGEPLVRKGVIGLIKNISNIPGIQDIALTTNGLLIKKYGEALKDAGLKRINISIDSLRPDRYKEITRGGDLSQVLEGIQEALRLGMTPVKLNVVVIGGYNEDEIEDFANLTVDDPIDVRFIELMPIGEASGWAKDRFLSNEEVKSKIEGLVPIITDATSPARLYRLPGAKGRVGFINPISSHFCESCNRIRVTSDGKLKPCLHSNHEIDLLRVARENPEQIGAVLSNGIQLKPEKHYLYTNKHEMSARSMSEIGG.

Residues 4–226 (TFQRSINYMR…PIITDATSPA (223 aa)) enclose the Radical SAM core domain. Position 13 (Arg-13) interacts with GTP. [4Fe-4S] cluster contacts are provided by Cys-20 and Cys-24. Position 26 (Tyr-26) interacts with S-adenosyl-L-methionine. Cys-27 contacts [4Fe-4S] cluster. A GTP-binding site is contributed by Arg-63. Gly-67 lines the S-adenosyl-L-methionine pocket. Thr-94 is a GTP binding site. Ser-118 serves as a coordination point for S-adenosyl-L-methionine. Lys-155 serves as a coordination point for GTP. Met-189 contributes to the S-adenosyl-L-methionine binding site. Cys-249 and Cys-252 together coordinate [4Fe-4S] cluster. Position 254–256 (254–256 (RIR)) interacts with GTP. Cys-266 serves as a coordination point for [4Fe-4S] cluster.

The protein belongs to the radical SAM superfamily. MoaA family. In terms of assembly, monomer and homodimer. The cofactor is [4Fe-4S] cluster.

The enzyme catalyses GTP + AH2 + S-adenosyl-L-methionine = (8S)-3',8-cyclo-7,8-dihydroguanosine 5'-triphosphate + 5'-deoxyadenosine + L-methionine + A + H(+). Its pathway is cofactor biosynthesis; molybdopterin biosynthesis. In terms of biological role, catalyzes the cyclization of GTP to (8S)-3',8-cyclo-7,8-dihydroguanosine 5'-triphosphate. This chain is GTP 3',8-cyclase, found in Alkaliphilus metalliredigens (strain QYMF).